A 309-amino-acid chain; its full sequence is Olfactory receptor 6C4 (309 aa).

Residues 1–23 (MKNRTMFGEFILLGLTNQPELQV) are Extracellular-facing. An N-linked (GlcNAc...) asparagine glycan is attached at Asn-3. Residues 24 to 44 (MIFIFLFLTYMLSILGNLTII) traverse the membrane as a helical segment. At 45-52 (TLTLLDPH) the chain is on the cytoplasmic side. Residues 53-73 (LQTPMYFFLRNFSFLEISFTS) form a helical membrane-spanning segment. At 74 to 97 (IFIPRFLTSMTTGNKVISFAGCLT) the chain is on the extracellular side. Cys-95 and Cys-187 are oxidised to a cystine. A helical transmembrane segment spans residues 98 to 118 (QYFFAIFLGATEFYLLASMSY). Over 119–137 (DRYVAICKPLHYLTIMSSR) the chain is Cytoplasmic. The chain crosses the membrane as a helical span at residues 138-158 (VCIQLVFCSWLGGFLAILPPI). Over 159–195 (ILMTQVDFCVSNILNHYYCDYGPLVELACSDTSLLEL) the chain is Extracellular. Residues 196 to 215 (MVILLAVVTLMVTLVLVTLS) form a helical membrane-spanning segment. At 216 to 235 (YTYIIRTILRIPSAQQRTKA) the chain is on the cytoplasmic side. Residues 236 to 256 (FSTCSSHMIVISLSYGSCMFM) traverse the membrane as a helical segment. The Extracellular segment spans residues 257-269 (YINPSAKEGGAFN). A helical membrane pass occupies residues 270–290 (KGIAVLITSVTPLLNPFIYTL). Topologically, residues 291–309 (RNQQVKQAFKDSVKKIVKL) are cytoplasmic.

It belongs to the G-protein coupled receptor 1 family.

It localises to the cell membrane. Odorant receptor. This is Olfactory receptor 6C4 (OR6C4) from Homo sapiens (Human).